A 191-amino-acid polypeptide reads, in one-letter code: Protein Ves (191 aa).

This sequence belongs to the Ves family.

The protein is Protein Ves of Escherichia coli (strain ATCC 8739 / DSM 1576 / NBRC 3972 / NCIMB 8545 / WDCM 00012 / Crooks).